The primary structure comprises 298 residues: Cyanophycinase (298 aa).

Active-site charge relay system residues include S155, E173, and H197.

This sequence belongs to the peptidase S51 family.

The catalysed reaction is [L-4-(L-arginin-2-N-yl)aspartate](n) + H2O = [L-4-(L-arginin-2-N-yl)aspartate](n-1) + L-4-(L-arginin-2-N-yl)aspartate. Exopeptidase that catalyzes the hydrolytic cleavage of multi-L-arginyl-poly-L-aspartic acid (cyanophycin; a water-insoluble reserve polymer) into aspartate-arginine dipeptides. The chain is Cyanophycinase (cphB) from Trichormus variabilis (strain ATCC 29413 / PCC 7937) (Anabaena variabilis).